The chain runs to 755 residues: Cartilage oligomeric matrix protein (755 aa).

Residues 1–19 (MSPTACVLVLALAALRATG) form the signal peptide. Positions 21-84 (GQIPLGGDLA…PARTPGLSVR (64 aa)) are COMP N-terminal. An EGF-like 1 domain is found at 85-124 (PVALCAPGSCFPGVVCTETATGARCGPCPPGYTGNGSHCT). 21 disulfide bridges follow: C89/C100, C94/C109, C112/C123, C129/C140, C134/C149, C152/C176, C182/C195, C189/C204, C207/C219, C227/C241, C235/C251, C253/C264, C280/C285, C290/C310, C326/C346, C349/C369, C385/C405, C408/C428, C446/C466, C482/C502, and C518/C739. An N-linked (GlcNAc...) asparagine glycan is attached at N119. The 53-residue stretch at 125-177 (DVNECNAHPCFPRVRCINTSPGFHCEACPPGFSGPTHEGVGLTFAKTNKQVCT) folds into the EGF-like 2; calcium-binding domain. One can recognise an EGF-like 3; calcium-binding domain in the interval 178–220 (DINECETGQHNCVPNSVCVNTRGSFQCGPCQPGFVGDQRSGCQ). Residues 223-265 (GQHFCPDGSPSPCHEKADCILERDGSRSCVCAVGWAGNGLLCG) form the EGF-like 4 domain. TSP type-3 repeat units lie at residues 266–298 (RDTD…NSGQ), 299–334 (EDVD…NPDQ), 335–357 (RNSD…NDDQ), 358–393 (KDTD…NFDQ), 394–416 (SDSD…NPDQ), 417–454 (RDVD…NSAQ), 455–490 (QDSD…NPGQ), and 491–526 (EDND…EVTL). A disordered region spans residues 295 to 501 (NSGQEDVDRD…DNDRDGVGDA (207 aa)). Composition is skewed to basic and acidic residues over residues 332–344 (PDQR…KWGD) and 350–365 (RSQK…RDGQ). S394 is modified (phosphoserine). Composition is skewed to basic and acidic residues over residues 412–424 (DNPD…HDFV) and 456–465 (DSDHDGKGDA). The mediates cell survival and induction of the IAP family of survival proteins stretch occupies residues 525-755 (TLTDFRAFQT…DYERHRLRRA (231 aa)). A TSP C-terminal domain is found at 530-744 (RAFQTVVLDP…LRYRCNDTIP (215 aa)). A glycan (N-linked (GlcNAc...) asparagine) is linked at N740.

The protein belongs to the thrombospondin family. In terms of assembly, pentamer; disulfide-linked. Exists in a more compact conformation in the presence of calcium and shows a more extended conformation in the absence of calcium. Interacts with ITGB3, ITGA5 and FN1. Binding to FN1 requires the presence of divalent cations (Ca(2+), Mg(2+) or Mn(2+)). The greatest amount of binding is seen in the presence of Mn(2+). Interacts with MATN1, MATN3, MATN4 and ACAN. Binds heparin, heparan sulfate and chondroitin sulfate. EDTA dimishes significantly its binding to ACAN and abolishes its binding to MATN3, MATN4 and chondroitin sulfate. Interacts with collagen I, II and IX, and interaction with these collagens is dependent on the presence of zinc ions. Interacts with ADAMTS12. Interacts with ITGA7. Requires Ca(2+) as cofactor. Proteolytically cleaved by metalloproteases ADAMTS4 and ADAMTS1 with ADAMTS4 showing more potent activity.

It is found in the secreted. The protein resides in the extracellular space. Its subcellular location is the extracellular matrix. Functionally, plays a role in the structural integrity of cartilage via its interaction with other extracellular matrix proteins such as the collagens and fibronectin. Can mediate the interaction of chondrocytes with the cartilage extracellular matrix through interaction with cell surface integrin receptors. Could play a role in the pathogenesis of osteoarthritis. Potent suppressor of apoptosis in both primary chondrocytes and transformed cells. Suppresses apoptosis by blocking the activation of caspase-3 and by inducing the IAP family of survival proteins (BIRC3, BIRC2, BIRC5 and XIAP). Essential for maintaining a vascular smooth muscle cells (VSMCs) contractile/differentiated phenotype under physiological and pathological stimuli. Maintains this phenotype of VSMCs by interacting with ITGA7. The chain is Cartilage oligomeric matrix protein from Rattus norvegicus (Rat).